We begin with the raw amino-acid sequence, 588 residues long: L-fucose isomerase (588 aa).

Catalysis depends on proton acceptor residues E335 and D359. Residues E335, D359, and H525 each coordinate Mn(2+).

It belongs to the L-fucose isomerase family. Mn(2+) is required as a cofactor.

The protein localises to the cytoplasm. The enzyme catalyses L-fucose = L-fuculose. It functions in the pathway carbohydrate degradation; L-fucose degradation; L-lactaldehyde and glycerone phosphate from L-fucose: step 1/3. Converts the aldose L-fucose into the corresponding ketose L-fuculose. This is L-fucose isomerase from Streptococcus pneumoniae (strain Taiwan19F-14).